Consider the following 65-residue polypeptide: Large ribosomal subunit protein bL35 (65 aa).

This sequence belongs to the bacterial ribosomal protein bL35 family.

The chain is Large ribosomal subunit protein bL35 from Geobacter sp. (strain M21).